The primary structure comprises 463 residues: L-seryl-tRNA(Sec) selenium transferase (463 aa).

Residue lysine 295 is modified to N6-(pyridoxal phosphate)lysine.

The protein belongs to the SelA family. In terms of assembly, homodecamer; pentamer of dimers. Binds only one seryl-tRNA(Sec) per dimer. Pyridoxal 5'-phosphate is required as a cofactor.

The protein resides in the cytoplasm. It carries out the reaction L-seryl-tRNA(Sec) + selenophosphate + H(+) = L-selenocysteinyl-tRNA(Sec) + phosphate. It participates in aminoacyl-tRNA biosynthesis; selenocysteinyl-tRNA(Sec) biosynthesis; selenocysteinyl-tRNA(Sec) from L-seryl-tRNA(Sec) (bacterial route): step 1/1. In terms of biological role, converts seryl-tRNA(Sec) to selenocysteinyl-tRNA(Sec) required for selenoprotein biosynthesis. This chain is L-seryl-tRNA(Sec) selenium transferase, found in Salmonella enteritidis PT4 (strain P125109).